The following is a 56-amino-acid chain: Large ribosomal subunit protein bL32c (56 aa).

It belongs to the bacterial ribosomal protein bL32 family.

It localises to the plastid. It is found in the chloroplast. In Tupiella akineta (Green alga), this protein is Large ribosomal subunit protein bL32c.